The chain runs to 185 residues: MINEIKKDTQDRMEKSLEALKSHISKIRTGRAQPSLLDGIQVEYYGSATPLRQLANVVAEDARTLAVNVFDRSLISAVEKAILTSDLGLNPSSAGATIRVPLPPLTEERRRDLIKIVKGEGEQGKIAIRNVRRDANDQIKALLKDKEISEDEERKAQDEIQKITDGYVKKVDEVLAAKEKELLDF.

This sequence belongs to the RRF family.

The protein localises to the cytoplasm. Its function is as follows. Responsible for the release of ribosomes from messenger RNA at the termination of protein biosynthesis. May increase the efficiency of translation by recycling ribosomes from one round of translation to another. The chain is Ribosome-recycling factor from Actinobacillus pleuropneumoniae serotype 5b (strain L20).